The chain runs to 646 residues: Threonine--tRNA ligase (646 aa).

The 61-residue stretch at Met1–Thr61 folds into the TGS domain. The interval Asp242–Pro540 is catalytic. Zn(2+) is bound by residues Cys336, His387, and His517.

Belongs to the class-II aminoacyl-tRNA synthetase family. As to quaternary structure, homodimer. Requires Zn(2+) as cofactor.

It localises to the cytoplasm. The catalysed reaction is tRNA(Thr) + L-threonine + ATP = L-threonyl-tRNA(Thr) + AMP + diphosphate + H(+). Its function is as follows. Catalyzes the attachment of threonine to tRNA(Thr) in a two-step reaction: L-threonine is first activated by ATP to form Thr-AMP and then transferred to the acceptor end of tRNA(Thr). Also edits incorrectly charged L-seryl-tRNA(Thr). This is Threonine--tRNA ligase from Lactococcus lactis subsp. lactis (strain IL1403) (Streptococcus lactis).